Consider the following 282-residue polypeptide: Stress response regulator protein 1 (282 aa).

Low complexity-rich tracts occupy residues 12–30 (NLSRSSSPAAPPTTNHSST) and 45–58 (NSQSDSNSTQSNNN). Disordered stretches follow at residues 12-31 (NLSRSSSPAAPPTTNHSSTV), 43-84 (DINS…DDED), and 112-139 (LTPFDGQTTSPQDSIISSKSSNKSTTVV). Over residues 66-77 (SDYNSYTHNQYY) the composition is skewed to polar residues. Residues 125-139 (SIISSKSSNKSTTVV) are compositionally biased toward low complexity. Residues 155-273 (SFLIVDDNII…LDFMANSIDD (119 aa)) enclose the Response regulatory domain. The residue at position 206 (D206) is a 4-aspartylphosphate.

In terms of biological role, required for stress adaptation, morphogenesis and virulence. The protein is Stress response regulator protein 1 (SRR1) of Candida albicans (strain SC5314 / ATCC MYA-2876) (Yeast).